A 737-amino-acid polypeptide reads, in one-letter code: Glycogen [starch] synthase, muscle (737 aa).

At S8 the chain carries Phosphoserine; by AMPK and PKA. At S11 the chain carries Phosphoserine. Residue K39 participates in UDP binding. Positions 205 and 211 each coordinate UDP-alpha-D-glucose. Residues H291, E292, Q294, H297, and K301 each contribute to the alpha-D-glucose 6-phosphate site. R331 serves as a coordination point for UDP. R331 contributes to the UDP-alpha-D-glucose binding site. S412 carries the post-translational modification Phosphoserine. An alpha-D-glucose 6-phosphate-binding site is contributed by H501. UDP-alpha-D-glucose-binding residues include E510, W512, and G513. T515 is a binding site for UDP. Positions 582 and 586 each coordinate alpha-D-glucose 6-phosphate. The segment at 634-737 (YRYPRPASVP…PTSSLGEERN (104 aa)) is disordered. Position 641 is a phosphoserine; by DYRK2, GSK3-alpha, GSK3-beta and PASK (S641). Residues S645 and S649 each carry the phosphoserine; by GSK3-alpha and GSK3-beta modification. S652 is modified (phosphoserine). S653 is subject to Phosphoserine; by GSK3-alpha and GSK3-beta. Position 657 is a phosphoserine; by CK2 (S657). Residues 658-681 (EDEEDPRNGPLEEDGERYDEDEEA) are compositionally biased toward acidic residues. Residues 682-695 (AKDRRNIRAPEWPR) show a composition bias toward basic and acidic residues. S698 bears the Phosphoserine mark. Residues 698–714 (SCTSSTSGSKRNSVDTA) show a composition bias toward polar residues. Phosphothreonine is present on T700. The residue at position 710 (S710) is a Phosphoserine. Low complexity predominate over residues 715–737 (TSSSLSTPSEPLSPTSSLGEERN). A Phosphothreonine modification is found at T721. A phosphoserine mark is found at S727 and S731.

It belongs to the glycosyltransferase 3 family. In terms of assembly, part of the GYS1-GYG1 complex, a heterooctamer composed of a tetramer of GYS1 and 2 dimers of GYG1, where each GYS1 protomer binds to one GYG1 subunit (via GYG1 C-terminus); the GYS1 tetramer may dissociate from GYG1 dimers to continue glycogen polymerization on its own. Phosphorylation at Ser-8 by AMPK inactivates the enzyme activity. Primed phosphorylation at Ser-657 (site 5) by CSNK2A1 and CSNK2A2 is required for inhibitory phosphorylation at Ser-641 (site 3a), Ser-645 (site 3b), Ser-649 (site 3c) and Ser-653 (site 4) by GSK3A an GSK3B. Phosphorylated at Ser-641 by PASK, leading to inactivation; phosphorylation by PASK is inhibited by glycogen. Phosphorylated at Ser-641 by DYRK2, leading to inactivation. Dephosphorylation at Ser-641 and Ser-645 by PP1 activates the enzyme.

It catalyses the reaction [(1-&gt;4)-alpha-D-glucosyl](n) + UDP-alpha-D-glucose = [(1-&gt;4)-alpha-D-glucosyl](n+1) + UDP + H(+). Its pathway is glycan biosynthesis; glycogen biosynthesis. Allosteric activation by glucose-6-phosphate. Phosphorylation reduces the activity towards UDP-glucose. When in the non-phosphorylated state, glycogen synthase does not require glucose-6-phosphate as an allosteric activator; when phosphorylated it does. Glycogen synthase participates in the glycogen biosynthetic process along with glycogenin and glycogen branching enzyme. Extends the primer composed of a few glucose units formed by glycogenin by adding new glucose units to it. In this context, glycogen synthase transfers the glycosyl residue from UDP-Glc to the non-reducing end of alpha-1,4-glucan. This chain is Glycogen [starch] synthase, muscle (GYS1), found in Pongo abelii (Sumatran orangutan).